A 289-amino-acid polypeptide reads, in one-letter code: Ribonuclease Z (289 aa).

The Zn(2+) site is built by H63, H65, D67, H68, H143, D197, and H255. The active-site Proton acceptor is D67.

It belongs to the RNase Z family. In terms of assembly, homodimer. It depends on Zn(2+) as a cofactor.

It carries out the reaction Endonucleolytic cleavage of RNA, removing extra 3' nucleotides from tRNA precursor, generating 3' termini of tRNAs. A 3'-hydroxy group is left at the tRNA terminus and a 5'-phosphoryl group is left at the trailer molecule.. In terms of biological role, zinc phosphodiesterase, which displays some tRNA 3'-processing endonuclease activity. Probably involved in tRNA maturation, by removing a 3'-trailer from precursor tRNA. The protein is Ribonuclease Z of Azobacteroides pseudotrichonymphae genomovar. CFP2.